A 450-amino-acid polypeptide reads, in one-letter code: Folate synthesis bifunctional protein (450 aa).

The tract at residues 1–166 (MTSWNFVCLS…TFAELAAIYP (166 aa)) is HPPK. One can recognise a Pterin-binding domain in the interval 180-441 (TQIMGIVNIT…QVEGNRRALA (262 aa)). The interval 182–450 (IMGIVNITDN…AAAAWAGMFV (269 aa)) is DHPS. Mg(2+) is bound at residue asparagine 187. Residues threonine 227, aspartate 267, asparagine 287, aspartate 358, lysine 395, and 429-431 (RVH) contribute to the (7,8-dihydropterin-6-yl)methyl diphosphate site.

It in the C-terminal section; belongs to the DHPS family. This sequence in the N-terminal section; belongs to the HPPK family. It depends on Mg(2+) as a cofactor.

The catalysed reaction is 6-hydroxymethyl-7,8-dihydropterin + ATP = (7,8-dihydropterin-6-yl)methyl diphosphate + AMP + H(+). It carries out the reaction (7,8-dihydropterin-6-yl)methyl diphosphate + 4-aminobenzoate = 7,8-dihydropteroate + diphosphate. The protein operates within cofactor biosynthesis; tetrahydrofolate biosynthesis; 2-amino-4-hydroxy-6-hydroxymethyl-7,8-dihydropteridine diphosphate from 7,8-dihydroneopterin triphosphate: step 4/4. Its pathway is cofactor biosynthesis; tetrahydrofolate biosynthesis; 7,8-dihydrofolate from 2-amino-4-hydroxy-6-hydroxymethyl-7,8-dihydropteridine diphosphate and 4-aminobenzoate: step 1/2. The chain is Folate synthesis bifunctional protein (folKP) from Chlamydia trachomatis serovar D (strain ATCC VR-885 / DSM 19411 / UW-3/Cx).